A 211-amino-acid polypeptide reads, in one-letter code: MTNVFIYPNVEFIAGVDEVGRGPLVGAVVTAAVILDPHNPIEGLKDSKKLSEKKRLLLAEEIKQKALAWSLGRAEPAEIDKLNILHATMLAMQRAVENLKIQPHFVLVDGNRIPQLPMSAQAVIKGDSLVAEISAASILAKVARDQEMIELDRRYPEYAFAQHKGYPTKLHLERLAQFGVLPEYRRSFAPVKKLLSTLLSKNHEYVFKIQK.

The 190-residue stretch at 11–200 folds into the RNase H type-2 domain; the sequence is EFIAGVDEVG…VKKLLSTLLS (190 aa). The a divalent metal cation site is built by Asp17, Glu18, and Asp109.

It belongs to the RNase HII family. It depends on Mn(2+) as a cofactor. Mg(2+) is required as a cofactor.

The protein localises to the cytoplasm. The catalysed reaction is Endonucleolytic cleavage to 5'-phosphomonoester.. In terms of biological role, endonuclease that specifically degrades the RNA of RNA-DNA hybrids. The chain is Ribonuclease HII from Histophilus somni (strain 2336) (Haemophilus somnus).